Reading from the N-terminus, the 250-residue chain is 2,3-bisphosphoglycerate-dependent phosphoglycerate mutase (250 aa).

Residues Arg-8–Asn-15, Thr-21–Gly-22, Arg-60, Glu-87–Tyr-90, Lys-98, Arg-114–Arg-115, and Gly-183–Asn-184 contribute to the substrate site. His-9 (tele-phosphohistidine intermediate) is an active-site residue. The Proton donor/acceptor role is filled by Glu-87.

This sequence belongs to the phosphoglycerate mutase family. BPG-dependent PGAM subfamily.

It carries out the reaction (2R)-2-phosphoglycerate = (2R)-3-phosphoglycerate. Its pathway is carbohydrate degradation; glycolysis; pyruvate from D-glyceraldehyde 3-phosphate: step 3/5. In terms of biological role, catalyzes the interconversion of 2-phosphoglycerate and 3-phosphoglycerate. This is 2,3-bisphosphoglycerate-dependent phosphoglycerate mutase from Borrelia duttonii (strain Ly).